The primary structure comprises 75 residues: Exodeoxyribonuclease 7 small subunit (75 aa).

It belongs to the XseB family. As to quaternary structure, heterooligomer composed of large and small subunits.

It localises to the cytoplasm. It catalyses the reaction Exonucleolytic cleavage in either 5'- to 3'- or 3'- to 5'-direction to yield nucleoside 5'-phosphates.. Bidirectionally degrades single-stranded DNA into large acid-insoluble oligonucleotides, which are then degraded further into small acid-soluble oligonucleotides. This is Exodeoxyribonuclease 7 small subunit from Elusimicrobium minutum (strain Pei191).